We begin with the raw amino-acid sequence, 192 residues long: NF-kappa-B inhibitor-interacting Ras-like protein 1 (192 aa).

11 to 18 contributes to the GTP binding site; that stretch reads GLLSVGKT. The Effector region signature appears at 35-43; it reads DCETLEDVY. Residues 58–93 are interactions with NFKBIA and NFKBIB; the sequence is HLYDTRGLQKGVELPKHYFSFADGFVLVYSVNNLES. Residues 61–65 and 120–123 contribute to the GTP site; these read DTRGL and NKLD. Positions 168-192 are disordered; it reads LSQPQSKSSFPLPGRKNKGNSNPEN.

The protein belongs to the small GTPase superfamily. Ras family. KappaB-Ras subfamily. As to quaternary structure, interacts with both NF-kappa-B inhibitor alpha (NFKBIA) and beta (NFKBIB) in vitro. However, it probably only interacts with NFKBIB in vivo. Forms a complex with NFKBIB and NF-kappa-B heterodimer (p50/NFKB1 and p65/RELA). Also interacts with c-Rel (REL).

Its subcellular location is the cytoplasm. Its function is as follows. Atypical Ras-like protein that acts as a potent regulator of NF-kappa-B activity by preventing the degradation of NF-kappa-B inhibitor beta (NFKBIB) by most signals, explaining why NFKBIB is more resistant to degradation. May act by blocking phosphorylation of NFKBIB and mediating cytoplasmic retention of p65/RELA NF-kappa-B subunit. It is unclear whether it acts as a GTPase. Both GTP- and GDP-bound forms block phosphorylation of NFKBIB. This is NF-kappa-B inhibitor-interacting Ras-like protein 1 (Nkiras1) from Mus musculus (Mouse).